The primary structure comprises 1076 residues: Carbamoyl phosphate synthase large chain (1076 aa).

The segment at M1–E403 is carboxyphosphate synthetic domain. 12 residues coordinate ATP: R129, R169, G175, G176, E208, L210, E215, G241, I242, H243, Q285, and E299. Residues D133–V328 enclose the ATP-grasp 1 domain. Q285, E299, and N301 together coordinate Mg(2+). Residues Q285, E299, and N301 each coordinate Mn(2+). The interval V404–A553 is oligomerization domain. The interval N554–G935 is carbamoyl phosphate synthetic domain. Residues Q678–V869 form the ATP-grasp 2 domain. ATP contacts are provided by R714, R753, L755, E760, G785, V786, H787, S788, Q828, and E840. Q828, E840, and N842 together coordinate Mg(2+). Residues Q828, E840, and N842 each contribute to the Mn(2+) site. Residues S936–A1076 form the MGS-like domain. An allosteric domain region spans residues S936–A1076.

The protein belongs to the CarB family. Composed of two chains; the small (or glutamine) chain promotes the hydrolysis of glutamine to ammonia, which is used by the large (or ammonia) chain to synthesize carbamoyl phosphate. Tetramer of heterodimers (alpha,beta)4. Mg(2+) serves as cofactor. The cofactor is Mn(2+).

It carries out the reaction hydrogencarbonate + L-glutamine + 2 ATP + H2O = carbamoyl phosphate + L-glutamate + 2 ADP + phosphate + 2 H(+). The catalysed reaction is hydrogencarbonate + NH4(+) + 2 ATP = carbamoyl phosphate + 2 ADP + phosphate + 2 H(+). It functions in the pathway amino-acid biosynthesis; L-arginine biosynthesis; carbamoyl phosphate from bicarbonate: step 1/1. It participates in pyrimidine metabolism; UMP biosynthesis via de novo pathway; (S)-dihydroorotate from bicarbonate: step 1/3. Large subunit of the glutamine-dependent carbamoyl phosphate synthetase (CPSase). CPSase catalyzes the formation of carbamoyl phosphate from the ammonia moiety of glutamine, carbonate, and phosphate donated by ATP, constituting the first step of 2 biosynthetic pathways, one leading to arginine and/or urea and the other to pyrimidine nucleotides. The large subunit (synthetase) binds the substrates ammonia (free or transferred from glutamine from the small subunit), hydrogencarbonate and ATP and carries out an ATP-coupled ligase reaction, activating hydrogencarbonate by forming carboxy phosphate which reacts with ammonia to form carbamoyl phosphate. The polypeptide is Carbamoyl phosphate synthase large chain (Vibrio cholerae serotype O1 (strain ATCC 39315 / El Tor Inaba N16961)).